We begin with the raw amino-acid sequence, 51 residues long: Ribosome biogenesis protein Nop10 (51 aa).

Belongs to the NOP10 family.

Involved in ribosome biogenesis; more specifically in 18S rRNA pseudouridylation and in cleavage of pre-rRNA. This Methanococcus aeolicus (strain ATCC BAA-1280 / DSM 17508 / OCM 812 / Nankai-3) protein is Ribosome biogenesis protein Nop10.